We begin with the raw amino-acid sequence, 222 residues long: THAP domain-containing protein 6 (222 aa).

A THAP-type zinc finger spans residues 1–89 (MVKCCSAIGC…LKPGVIPSIF (89 aa)). The HCFC1-binding motif (HBM) motif lies at 139–142 (EHSY). A coiled-coil region spans residues 149 to 194 (KKLKHKLDHVIGELEDTKESLRNVLDREKRFQKSLRKTIRELKDEC).

The sequence is that of THAP domain-containing protein 6 (THAP6) from Homo sapiens (Human).